We begin with the raw amino-acid sequence, 956 residues long: Replication factor C subunit 1 (956 aa).

Composition is skewed to basic and acidic residues over residues 1-15 (MSDIRKWFMKAHEKG) and 50-74 (TADRRKTSKYFGKDKTKVKDEKEVE). Disordered regions lie at residues 1–206 (MSDI…TPDC) and 286–332 (KKSL…AKGK). Residues 158 to 183 (RGRGGRAAPGASTGGRGRGGGRGGFM) are compositionally biased toward gly residues. Basic and acidic residues-rich tracts occupy residues 186-200 (GERKDPPHKGEKEVP) and 288-298 (SLPERSNKGTE). In terms of domain architecture, BRCT spans 202-292 (GTPDCLAGLT…KPVKKSLPER (91 aa)). 399–406 (SGTPGIGK) provides a ligand contact to ATP. The tract at residues 858–956 (LEPTVDSLRD…GRGSGAKRKR (99 aa)) is disordered. Residues 866–892 (RDEDGEPLADNEEGNGSDAEEDSEEAT) are compositionally biased toward acidic residues. Positions 916–925 (KGAGSSGSRK) are enriched in low complexity.

The protein belongs to the activator 1 large subunit family. Heterotetramer of subunits RFC2, RFC3, RFC4 and RFC5 that can form a complex with RFC1. In terms of tissue distribution, expressed at high levels in flowers and siliques, and at lower levels in roots, stems and leaves.

It is found in the nucleus. Plays a role as mediator of transcriptional gene silencing (TGS), DNA replication, DNA repair, hypersensitive response (HR) and telomere length regulation. Is required in meiosis for DNA double-strand break (DSB) repair during meiotic homologous recombination. May participate in the RAD51-mediated recombination intermediate repair process. Is important for lagging strand synthesis. Promotes meiotic recombination via a specific pathway for crossovers (COs) that involves the formation of double Holliday Junction (dHJ) intermediates. The chain is Replication factor C subunit 1 (RFC1) from Arabidopsis thaliana (Mouse-ear cress).